The chain runs to 504 residues: ATP synthase subunit alpha (504 aa).

171-178 is a binding site for ATP; the sequence is GDRQTGKT.

Belongs to the ATPase alpha/beta chains family. As to quaternary structure, F-type ATPases have 2 components, CF(1) - the catalytic core - and CF(0) - the membrane proton channel. CF(1) has five subunits: alpha(3), beta(3), gamma(1), delta(1), epsilon(1). CF(0) has three main subunits: a(1), b(2) and c(9-12). The alpha and beta chains form an alternating ring which encloses part of the gamma chain. CF(1) is attached to CF(0) by a central stalk formed by the gamma and epsilon chains, while a peripheral stalk is formed by the delta and b chains.

It localises to the cell inner membrane. It carries out the reaction ATP + H2O + 4 H(+)(in) = ADP + phosphate + 5 H(+)(out). Functionally, produces ATP from ADP in the presence of a proton gradient across the membrane. The alpha chain is a regulatory subunit. This is ATP synthase subunit alpha from Helicobacter hepaticus (strain ATCC 51449 / 3B1).